A 328-amino-acid chain; its full sequence is Phosphatidylglycerol--prolipoprotein diacylglyceryl transferase (328 aa).

The next 3 helical transmembrane spans lie at 15 to 35 (VIQGIPITWYSLSYILIILIS), 57 to 77 (IFMFSLVLGAILGGRLASTLV), and 106 to 126 (GMAIHGGFLGAIIAPLITINT). Residue Arg156 participates in a 1,2-diacyl-sn-glycero-3-phospho-(1'-sn-glycerol) binding. The next 2 helical transmembrane spans lie at 242–262 (GFIFGVYVMLYAFFRFFIEYL) and 289–309 (ISMGQILSLTLMLSGLIWIIV).

Belongs to the Lgt family.

It localises to the cell inner membrane. It catalyses the reaction L-cysteinyl-[prolipoprotein] + a 1,2-diacyl-sn-glycero-3-phospho-(1'-sn-glycerol) = an S-1,2-diacyl-sn-glyceryl-L-cysteinyl-[prolipoprotein] + sn-glycerol 1-phosphate + H(+). Its pathway is protein modification; lipoprotein biosynthesis (diacylglyceryl transfer). Functionally, catalyzes the transfer of the diacylglyceryl group from phosphatidylglycerol to the sulfhydryl group of the N-terminal cysteine of a prolipoprotein, the first step in the formation of mature lipoproteins. This Borreliella burgdorferi (strain ATCC 35210 / DSM 4680 / CIP 102532 / B31) (Borrelia burgdorferi) protein is Phosphatidylglycerol--prolipoprotein diacylglyceryl transferase.